The chain runs to 908 residues: Putative cell signaling protein HAM1 (908 aa).

2 disordered regions span residues 1 to 24 and 177 to 359; these read MSVA…SAVS and TKAA…EHRQ. Basic and acidic residues-rich tracts occupy residues 179–192, 231–247, 261–283, 306–321, and 338–359; these read AADK…KLDS, HPRD…DKGK, AKSD…KETG, EQKE…KRDA, and NQEK…EHRQ. Positions 255-282 form a coiled coil; it reads YNQAQEAKSDAQSKAQDLKSSARDYKET.

Post-translationally, palmitoylated.

In terms of biological role, may act as a negative regulator of mating during vegetative growth. The protein is Putative cell signaling protein HAM1 of Cryptococcus neoformans var. grubii serotype A (strain H99 / ATCC 208821 / CBS 10515 / FGSC 9487) (Filobasidiella neoformans var. grubii).